The chain runs to 149 residues: Large ribosomal subunit protein bL9 (149 aa).

It belongs to the bacterial ribosomal protein bL9 family.

Its function is as follows. Binds to the 23S rRNA. The chain is Large ribosomal subunit protein bL9 from Legionella pneumophila subsp. pneumophila (strain Philadelphia 1 / ATCC 33152 / DSM 7513).